The chain runs to 159 residues: Transcriptional repressor NrdR (159 aa).

Polar residues predominate over residues 1-11 (MQCPSCQNTDS). A disordered region spans residues 1–20 (MQCPSCQNTDSRVLESRSAD). A zinc finger lies at 3–34 (CPSCQNTDSRVLESRSADSGRSVRRRRECLNC). In terms of domain architecture, ATP-cone spans 49–139 (INVLKRSGAK…VYRQFNGIND (91 aa)).

The protein belongs to the NrdR family. Zn(2+) is required as a cofactor.

Functionally, negatively regulates transcription of bacterial ribonucleotide reductase nrd genes and operons by binding to NrdR-boxes. The protein is Transcriptional repressor NrdR of Prochlorococcus marinus (strain NATL1A).